A 667-amino-acid chain; its full sequence is MDGLRASAGLLRRGRLRRRRQQQPHSGSVLALPLRPRKIRRQLRRSVSSRMAALRAQTLQSEDSEDSRVESTVGEPGDPLAGGTAALSDATGREPHGQLGPVELLEASPASRSLQTPRALVEAQTPAARLVEAQTPAARLVEAHTPAARLVEAHTPPARLVEASALPARLVETSALLCSTQHLAAVPPSVAPAMLSGPQGESTGEELPWDSPLQRILAELNRIPSSRRRAARLFEWLISPMPPDHFYRRLWEREAVLVRRQDHSYYQGLFSTAVLDSILRNEEVQFGQHLDAARYINGRRETLNPPGRALPAAAWSLYRAGCSLRLLCPQAFSTTVWQFLAVLQEQFGSMAGSNVYLTPPNSQGFAPHYDDIEAFVLQLEGRKLWRVYRPRVPTEELALTSSPNFSQDDLGEPVLQTVLEPGDLLYFPRGFIHQAECQDGVHSLHLTLSTFQRNTWGDFLEAVLPLAVQAAMEENVEFRRGLPRDFMDYMGAQHSDSKDPRRTAFMEKVRVLVARLGHFAPVDAVADQRAKDFIHDSLPPVLTDRERALSVYGLPIRWEAGEPVNVGAQLTTETEVHMLQDGIARLVGEGGHLFLYYTVENSRVYHLEEPKCLEIYPQQADAMELLLRSYPEFVRVGDLPCDTVEDQLSLATMLYDKGLLLTKMPLT.

Residue methionine 1 is modified to N-acetylmethionine. The segment covering 1-11 has biased composition (low complexity); it reads MDGLRASAGLL. The tract at residues 1–99 is disordered; the sequence is MDGLRASAGL…ATGREPHGQL (99 aa). Composition is skewed to basic residues over residues 12–22 and 35–44; these read RRGRLRRRRQQ and RPRKIRRQLR. Residues serine 61, serine 64, and serine 108 each carry the phosphoserine modification. The 146-residue stretch at 322-467 folds into the JmjC domain; that stretch reads CSLRLLCPQA…DFLEAVLPLA (146 aa). The Fe cation site is built by histidine 368, aspartate 370, and histidine 433.

It belongs to the ROX family. NO66 subfamily. In terms of assembly, interacts with SP7/OSX; the interaction is direct. Interacts with MYC. Interacts with PHF19; leading to its recruitment to H3K36me3 sites. Fe(2+) serves as cofactor.

The protein resides in the nucleus. It is found in the nucleolus. Its subcellular location is the nucleoplasm. It carries out the reaction N(6),N(6)-dimethyl-L-lysyl(36)-[histone H3] + 2 2-oxoglutarate + 2 O2 = L-lysyl(36)-[histone H3] + 2 formaldehyde + 2 succinate + 2 CO2. The catalysed reaction is N(6)-methyl-L-lysyl-[protein] + 2-oxoglutarate + O2 = L-lysyl-[protein] + formaldehyde + succinate + CO2. The enzyme catalyses L-histidyl-[protein] + 2-oxoglutarate + O2 = (3S)-3-hydroxy-L-histidyl-[protein] + succinate + CO2. Oxygenase that can act as both a histone lysine demethylase and a ribosomal histidine hydroxylase. Specifically demethylates 'Lys-4' (H3K4me) and 'Lys-36' (H3K36me) of histone H3, thereby playing a central role in histone code. Preferentially demethylates trimethylated H3 'Lys-4' (H3K4me3) and monomethylated H3 'Lys-4' (H3K4me1) residues, while it has weaker activity for dimethylated H3 'Lys-36' (H3K36me2). Acts as a regulator of osteoblast differentiation via its interaction with SP7/OSX by demethylating H3K4me and H3K36me, thereby inhibiting SP7/OSX-mediated promoter activation. Also catalyzes demethylation of non-histone proteins, such as CGAS: demethylation of monomethylated CGAS promotes interaction between CGAS and PARP1, followed by PARP1 inactivation. Also catalyzes the hydroxylation of 60S ribosomal protein L8 on 'His-216', thereby playing a role in ribosome biogenesis. Participates in MYC-induced transcriptional activation. The protein is Ribosomal oxygenase 1 (RIOX1) of Bos taurus (Bovine).